Here is a 374-residue protein sequence, read N- to C-terminus: Chaperone protein DnaJ (374 aa).

Positions 5-69 (NYYQILGVSK…QKRAAYDRLG (65 aa)) constitute a J domain. The segment at 137–215 (GIEKNISFSS…CHGMGRYHKQ (79 aa)) adopts a CR-type zinc-finger fold. Zn(2+)-binding residues include cysteine 150, cysteine 153, cysteine 167, cysteine 170, cysteine 189, cysteine 192, cysteine 203, and cysteine 206. 4 CXXCXGXG motif repeats span residues 150–157 (CDTCHGSG), 167–174 (CDACSGVG), 189–196 (CHKCQGNG), and 203–210 (CKKCHGMG).

The protein belongs to the DnaJ family. As to quaternary structure, homodimer. The cofactor is Zn(2+).

The protein localises to the cytoplasm. Its function is as follows. Participates actively in the response to hyperosmotic and heat shock by preventing the aggregation of stress-denatured proteins and by disaggregating proteins, also in an autonomous, DnaK-independent fashion. Unfolded proteins bind initially to DnaJ; upon interaction with the DnaJ-bound protein, DnaK hydrolyzes its bound ATP, resulting in the formation of a stable complex. GrpE releases ADP from DnaK; ATP binding to DnaK triggers the release of the substrate protein, thus completing the reaction cycle. Several rounds of ATP-dependent interactions between DnaJ, DnaK and GrpE are required for fully efficient folding. Also involved, together with DnaK and GrpE, in the DNA replication of plasmids through activation of initiation proteins. The protein is Chaperone protein DnaJ of Rickettsia massiliae (strain Mtu5).